We begin with the raw amino-acid sequence, 186 residues long: Translation initiation factor IF-3 (186 aa).

The protein belongs to the IF-3 family. In terms of assembly, monomer.

It localises to the cytoplasm. Its function is as follows. IF-3 binds to the 30S ribosomal subunit and shifts the equilibrium between 70S ribosomes and their 50S and 30S subunits in favor of the free subunits, thus enhancing the availability of 30S subunits on which protein synthesis initiation begins. The sequence is that of Translation initiation factor IF-3 from Chlamydia caviae (strain ATCC VR-813 / DSM 19441 / 03DC25 / GPIC) (Chlamydophila caviae).